The chain runs to 466 residues: Argininosuccinate lyase (466 aa).

Belongs to the lyase 1 family. Argininosuccinate lyase subfamily.

It localises to the cytoplasm. The enzyme catalyses 2-(N(omega)-L-arginino)succinate = fumarate + L-arginine. The protein operates within amino-acid biosynthesis; L-arginine biosynthesis; L-arginine from L-ornithine and carbamoyl phosphate: step 3/3. This Methylocella silvestris (strain DSM 15510 / CIP 108128 / LMG 27833 / NCIMB 13906 / BL2) protein is Argininosuccinate lyase.